The primary structure comprises 244 residues: Glucosamine-6-phosphate deaminase (244 aa).

Asp67 (proton acceptor; for enolization step) is an active-site residue. Asn136 functions as the For ring-opening step in the catalytic mechanism. His138 (proton acceptor; for ring-opening step) is an active-site residue. Glu143 functions as the For ring-opening step in the catalytic mechanism.

Belongs to the glucosamine/galactosamine-6-phosphate isomerase family. NagB subfamily.

The enzyme catalyses alpha-D-glucosamine 6-phosphate + H2O = beta-D-fructose 6-phosphate + NH4(+). It functions in the pathway amino-sugar metabolism; N-acetylneuraminate degradation; D-fructose 6-phosphate from N-acetylneuraminate: step 5/5. Functionally, catalyzes the reversible isomerization-deamination of glucosamine 6-phosphate (GlcN6P) to form fructose 6-phosphate (Fru6P) and ammonium ion. This chain is Glucosamine-6-phosphate deaminase, found in Clostridium botulinum (strain ATCC 19397 / Type A).